We begin with the raw amino-acid sequence, 246 residues long: Small ribosomal subunit protein uS2c (246 aa).

Belongs to the universal ribosomal protein uS2 family.

The protein resides in the plastid. Its subcellular location is the chloroplast. This chain is Small ribosomal subunit protein uS2c (rps2), found in Pelargonium hortorum (Common geranium).